The following is a 195-amino-acid chain: UPF0215 protein TGAM_0348 (195 aa).

The protein belongs to the UPF0215 family.

The protein is UPF0215 protein TGAM_0348 of Thermococcus gammatolerans (strain DSM 15229 / JCM 11827 / EJ3).